The primary structure comprises 602 residues: Isocitrate dehydrogenase kinase/phosphatase (602 aa).

ATP is bound by residues 327–333 (APGIKGM) and lysine 348. The active site involves aspartate 383.

This sequence belongs to the AceK family.

It localises to the cytoplasm. It catalyses the reaction L-seryl-[isocitrate dehydrogenase] + ATP = O-phospho-L-seryl-[isocitrate dehydrogenase] + ADP + H(+). In terms of biological role, bifunctional enzyme which can phosphorylate or dephosphorylate isocitrate dehydrogenase (IDH) on a specific serine residue. This is a regulatory mechanism which enables bacteria to bypass the Krebs cycle via the glyoxylate shunt in response to the source of carbon. When bacteria are grown on glucose, IDH is fully active and unphosphorylated, but when grown on acetate or ethanol, the activity of IDH declines drastically concomitant with its phosphorylation. In Paraburkholderia phymatum (strain DSM 17167 / CIP 108236 / LMG 21445 / STM815) (Burkholderia phymatum), this protein is Isocitrate dehydrogenase kinase/phosphatase.